We begin with the raw amino-acid sequence, 218 residues long: Thiopurine S-methyltransferase (218 aa).

Residues tryptophan 10, leucine 45, glutamate 66, and arginine 123 each contribute to the S-adenosyl-L-methionine site.

Belongs to the class I-like SAM-binding methyltransferase superfamily. TPMT family.

The protein localises to the cytoplasm. The catalysed reaction is S-adenosyl-L-methionine + a thiopurine = S-adenosyl-L-homocysteine + a thiopurine S-methylether.. The polypeptide is Thiopurine S-methyltransferase (Shewanella putrefaciens (strain CN-32 / ATCC BAA-453)).